Consider the following 219-residue polypeptide: Occludin/ELL domain-containing protein 1 (219 aa).

A disordered region spans residues 1-110; sequence MQIHAGPASR…DYELKYPPVT (110 aa). Positions 17-43 are enriched in low complexity; that stretch reads LARLSGPEATCNSRPAARGRQRAAAPR. Residues 72-93 show a composition bias toward basic and acidic residues; it reads VFADELRPREPLHPEKHPRDLG. The OCEL domain occupies 100–210; that stretch reads PDYELKYPPV…QIRKFDDQQD (111 aa).

Belongs to the ELL/occludin family.

The protein is Occludin/ELL domain-containing protein 1 (Ocel1) of Mus musculus (Mouse).